A 352-amino-acid polypeptide reads, in one-letter code: Biotin synthase (352 aa).

The Radical SAM core domain occupies 44 to 262 (NRVQVSTLLS…LAVARLLMPK (219 aa)). [4Fe-4S] cluster is bound by residues Cys59, Cys63, and Cys66. [2Fe-2S] cluster is bound by residues Cys103, Cys134, Cys194, and Arg266.

Belongs to the radical SAM superfamily. Biotin synthase family. In terms of assembly, homodimer. [4Fe-4S] cluster serves as cofactor. It depends on [2Fe-2S] cluster as a cofactor.

The enzyme catalyses (4R,5S)-dethiobiotin + (sulfur carrier)-SH + 2 reduced [2Fe-2S]-[ferredoxin] + 2 S-adenosyl-L-methionine = (sulfur carrier)-H + biotin + 2 5'-deoxyadenosine + 2 L-methionine + 2 oxidized [2Fe-2S]-[ferredoxin]. The protein operates within cofactor biosynthesis; biotin biosynthesis; biotin from 7,8-diaminononanoate: step 2/2. Functionally, catalyzes the conversion of dethiobiotin (DTB) to biotin by the insertion of a sulfur atom into dethiobiotin via a radical-based mechanism. The polypeptide is Biotin synthase (Pseudomonas putida (strain W619)).